A 535-amino-acid chain; its full sequence is Ribonuclease Y (535 aa).

The helical transmembrane segment at Ile4–Ile24 threads the bilayer. Residues Glu118–Ile141 form a disordered region. One can recognise a KH domain in the interval Thr225 to Leu285. Positions Val351–Ala444 constitute an HD domain.

The protein belongs to the RNase Y family.

The protein localises to the cell membrane. Functionally, endoribonuclease that initiates mRNA decay. This chain is Ribonuclease Y, found in Streptococcus pyogenes serotype M1.